The primary structure comprises 29 residues: Toxin Bcg III 15.67 (29 aa).

The 28-residue stretch at 2-29 (QGTACTGEHAHSFCLNGGTCRHIQQLGE) folds into the EGF-like domain. The cysteines at positions 6 and 21 are disulfide-linked.

Its subcellular location is the secreted. The protein resides in the nematocyst. Has both toxic and EGF activity. In Bunodosoma cangicum (Sea anemone), this protein is Toxin Bcg III 15.67.